The sequence spans 240 residues: Probable transcriptional regulatory protein HP_0162 (240 aa).

This sequence belongs to the TACO1 family.

Its subcellular location is the cytoplasm. This is Probable transcriptional regulatory protein HP_0162 from Helicobacter pylori (strain ATCC 700392 / 26695) (Campylobacter pylori).